The following is a 193-amino-acid chain: Protein CURVATURE THYLAKOID 1D, chloroplastic (193 aa).

Residues 1-51 (MELCTRSTTIITHLPASFNGHGYLAGKSVDRISLPLQRNVASLVLQSRTLR) constitute a chloroplast transit peptide. The Stromal portion of the chain corresponds to 52-117 (CSRKFPGETV…NDIKLDSDKT (66 aa)). The chain crosses the membrane as a helical span at residues 118-138 (YSILLYGSGAIVALYLTSAIV). Over 139–142 (SSLE) the chain is Lumenal. Residues 143-163 (AIPLFPKLMEVVGLGYTLWFT) form a helical membrane-spanning segment. The Stromal portion of the chain corresponds to 164 to 193 (TRYLLFKRNREELKTKVSEIKKQVLGSDSE).

This sequence belongs to the CURT family. Homo- and heterodimers and trimers.

The protein localises to the plastid. It localises to the chloroplast thylakoid membrane. In terms of biological role, determines thylakoid architecture by inducing membrane curvature. This chain is Protein CURVATURE THYLAKOID 1D, chloroplastic (CURT1D), found in Arabidopsis thaliana (Mouse-ear cress).